The primary structure comprises 570 residues: FERM domain-containing protein 5 (570 aa).

An FERM domain is found at 17–298 (YSCTVRLLDD…ENQAFYKLEK (282 aa)). Residues 308–353 (SNLFFKGSRFRYSGRVAKEVMESSAKIKREPPEIHRAGMVPSRSCP) are interaction with ROCK1. Residues 344 to 367 (AGMVPSRSCPSITHGPRLSSVPRT) form a disordered region. Serine 375 bears the Phosphoserine mark. Residues 385–407 (DSAHSTPVRSTSHGDTFLPHVRS) form a disordered region. Over residues 388-398 (HSTPVRSTSHG) the composition is skewed to polar residues. Residues 504-524 (LLLVTMGLLFVLLLLLIILTE) form a helical membrane-spanning segment.

Interacts with CTNND1. Interacts with ITGB5 (via cytoplasmic domain) and ROCK1.

It is found in the membrane. The protein localises to the cell junction. Its subcellular location is the adherens junction. May be involved in regulation of cell migration. May regulate cell-matrix interactions via its interaction with ITGB5 and modifying ITGB5 cytoplasmic tail interactions such as with FERMT2 and TLN1. May regulate ROCK1 kinase activity possibly involved in regulation of actin stress fiber formation. This chain is FERM domain-containing protein 5 (FRMD5), found in Homo sapiens (Human).